A 594-amino-acid chain; its full sequence is Transcriptional repressor p66-beta (594 aa).

Serine 17 is subject to Phosphoserine. Glycyl lysine isopeptide (Lys-Gly) (interchain with G-Cter in SUMO2) cross-links involve residues lysine 33 and lysine 66. The interval 62 to 143 (ELPTKQDGSG…ASSPRSSSRM (82 aa)) is disordered. Basic and acidic residues predominate over residues 74–89 (GYEEKLNGNLRPHGDN). Lysine 98 is covalently cross-linked (Glycyl lysine isopeptide (Lys-Gly) (interchain with G-Cter in SUMO2)). Residues 109-119 (SARRSEPDRGR) are compositionally biased toward basic and acidic residues. Threonine 121 is modified (phosphothreonine). Residues serine 123, serine 130, serine 135, and serine 136 each carry the phosphoserine modification. Residues 130–140 (SDNEASSPRSS) are compositionally biased toward low complexity. Residues 141 to 195 (SRMEERLKAANLEMFKGKGMEERQQLIKQLRDELRLEEARLVLLKKLRQSQLQKE) adopt a coiled-coil conformation. Lysine 148 participates in a covalent cross-link: Glycyl lysine isopeptide (Lys-Gly) (interchain with G-Cter in SUMO2). The segment at 166–191 (LIKQLRDELRLEEARLVLLKKLRQSQ) is CR1; interaction with MBD2 and MBD3. Lysine 200 is covalently cross-linked (Glycyl lysine isopeptide (Lys-Gly) (interchain with G-Cter in SUMO2)). Serine 209 bears the Phosphoserine mark. Positions 214–237 (SPAHVGQQGLSKLPSRPGAQGIEP) are disordered. Lysine 282 participates in a covalent cross-link: Glycyl lysine isopeptide (Lys-Gly) (interchain with G-Cter in SUMO2). Phosphoserine is present on residues serine 334, serine 339, and serine 341. The tract at residues 341–481 (SAMSDAANSQ…QEQEIEQRLQ (141 aa)) is CR2; histone tail-binding. Glycyl lysine isopeptide (Lys-Gly) (interchain with G-Cter in SUMO2) cross-links involve residues lysine 354, lysine 455, and lysine 468. Residues 415–468 (RVEPFVCAQCRTDFTPHWKQEKNGKILCEQCMTSNQKKALKAEHTNRLKNAFVK) form a GATA-type zinc finger. A coiled-coil region spans residues 450–483 (QKKALKAEHTNRLKNAFVKALQQEQEIEQRLQQQ). Serine 487 carries the phosphoserine modification. Lysine 499 participates in a covalent cross-link: Glycyl lysine isopeptide (Lys-Gly) (interchain with G-Cter in SUMO2).

In terms of assembly, homooligomer. Component of the nucleosome remodeling and deacetylase (NuRD) repressor complex, composed of core proteins MTA1, MTA2, MTA3, RBBP4, RBBP7, HDAC1, HDAC2, MBD2, MBD3, and peripherally associated proteins CDK2AP1, CDK2AP2, GATAD2A, GATAD2B, CHD3, CHD4 and CHD5. The exact stoichiometry of the NuRD complex is unknown, and some subunits such as MBD2 and MBD3, GATAD2A and GATAD2B, and CHD3, CHD4 and CHD5 define mutually exclusive NuRD complexes. Interacts with MBD2; this is required for the enhancement of MBD2-mediated repression and for targeting to the chromatin. Interacts with MBD3. Component of the MeCP1 histone deacetylase complex. Interacts with histone tails, including that of histones H2A, H2B, H3 and H4. Interacts with ERCC6.

The protein resides in the nucleus speckle. It localises to the nucleus. Its subcellular location is the chromosome. Functionally, transcriptional repressor. Acts as a component of the histone deacetylase NuRD complex which participates in the remodeling of chromatin. Enhances MBD2-mediated repression. Efficient repression requires the presence of GATAD2A. Targets MBD3 to discrete loci in the nucleus. May play a role in synapse development. This Mus musculus (Mouse) protein is Transcriptional repressor p66-beta (Gatad2b).